Reading from the N-terminus, the 228-residue chain is Lipoprotein-releasing system ATP-binding protein LolD (228 aa).

The ABC transporter domain occupies 6–225 (LEAKDVYKHF…ILHMQDGLWV (220 aa)). An ATP-binding site is contributed by 42–49 (GASGSGKS).

Belongs to the ABC transporter superfamily. Lipoprotein translocase (TC 3.A.1.125) family. As to quaternary structure, the complex is composed of two ATP-binding proteins (LolD) and two transmembrane proteins (LolC and LolE).

The protein resides in the cell inner membrane. Functionally, part of the ABC transporter complex LolCDE involved in the translocation of mature outer membrane-directed lipoproteins, from the inner membrane to the periplasmic chaperone, LolA. Responsible for the formation of the LolA-lipoprotein complex in an ATP-dependent manner. In Acinetobacter baylyi (strain ATCC 33305 / BD413 / ADP1), this protein is Lipoprotein-releasing system ATP-binding protein LolD.